The primary structure comprises 419 residues: Serine hydroxymethyltransferase (419 aa).

Residues Leu-120 and 124–126 (GHL) each bind (6S)-5,6,7,8-tetrahydrofolate. Lys-229 is subject to N6-(pyridoxal phosphate)lysine.

It belongs to the SHMT family. Homodimer. Requires pyridoxal 5'-phosphate as cofactor.

It is found in the cytoplasm. The enzyme catalyses (6R)-5,10-methylene-5,6,7,8-tetrahydrofolate + glycine + H2O = (6S)-5,6,7,8-tetrahydrofolate + L-serine. Its pathway is one-carbon metabolism; tetrahydrofolate interconversion. It functions in the pathway amino-acid biosynthesis; glycine biosynthesis; glycine from L-serine: step 1/1. Catalyzes the reversible interconversion of serine and glycine with tetrahydrofolate (THF) serving as the one-carbon carrier. This reaction serves as the major source of one-carbon groups required for the biosynthesis of purines, thymidylate, methionine, and other important biomolecules. Also exhibits THF-independent aldolase activity toward beta-hydroxyamino acids, producing glycine and aldehydes, via a retro-aldol mechanism. This Herpetosiphon aurantiacus (strain ATCC 23779 / DSM 785 / 114-95) protein is Serine hydroxymethyltransferase.